A 3608-amino-acid polypeptide reads, in one-letter code: MSRKERNFKRFFGQEKARVKLYKSGKQWVKAGIREVQLLKVLGLPFLNKDVEQINNLDTNKDKNFKNQAMKATGLAGGAFTFAMLNDHHAYAASETPMTSEIASNSETVANQNSTTVTKSETSTTEYISSQTSTSQDATSSTNSTEKSTSSSTTDSQTSTDSTSDKSTSNSEKQDSSMSNSDTKASSSSTTDNSTSNNSTTSEKDTNSQANTTSTDSQKGSTSTNDNSITSTSTKDNQIRKNSTESNSITASNSTSDSNSGSTVSTNSTTSQLTSTSESQINTDLGSTLLVSDSTSTSTSTAPLKLRTFSRLATTTFAAAAATSTTNTYTGAGTDTNYNIPIYYKLTTVNNGTSMTFTYTVTYDNPATTTVERPTALSNSYAIYNTGTTNQTMFTLGSAYGTPSTATSYITDSTGAQVSNPRANTTNINKQGSGYTWANGYQMNGAQAKQGYGLTTTWTVPINSSGDTSFTFNPYSTSVTGGTNFFNGKKVTVTDPTSTANSQSASTSTANSQSASTSKSTSTANSQSASTSTSTSTANSQSASTSTSTSTANSQSASTSTSTSTANSQSASTSTSTSTANSQSTSTSTSTSTANSQSTSTSTSTSVSDSTSASTSLSGSTSTSVSDSTSASTSLSDSASTSVSDSTSASTSLSASTSTSESDSTSASTSLSESTSTSLSDSLSASTSLSDSASTSVSDSTSASTSLSGSESASLSDSASASTSLSESTSTSESTSTSESDSTSASTSLSGSESASLSDSASASTSLSGSESASLSDSASASTSLSGSESASLSDSASASTSLSGSESASLSDSASASTSLSGSESASLSDSASASTSLSESTSTSLSDSASASTSLSESTSTSVSDSTSASTSLSASTSTSVSDSTSTSTSDSASTSTSVSDSTSTSTSLSGSTSTSVSDSTSASTSLSASTSTSVSDSTSTSTSDSASTSTSVSDSTSTSTSLSGSTSTSVSDSTSASTSLSESTSTSLSDSASASTSLSESTSTSVSDSTSTSTSDSASTSTSVSDSTSTSTSLSGSTSTSVSDSTSASTSDSASTSTSVSDSTSASTSDSASTSTSVSDSTSTSTSLSGSTSTSVSDSTSASTSLSESTSTSVSDSTSASTSLSDSASTSVSDSTSASTSLSESTSTSVSDSTSTSTSLSESTSTSVSDSASASTSLSDSASTSVSDSTSASTSLSGSTSTSVSDSTSTSTSLSESTSTSLSDSASASTSLSDSASTSVSDSTSASTSLSGSTSTSVSDSTSTSTSLSESTSTSLSDSASASTSLSASTSTSVSDSTSASTSLSGSTSTSESDSTSMSTSLSGSESTSLSDSLSASTSLSGSTSTSVSDSTSASTSLSGSTSTSVSDSTSVSTSLSASTSTSESDSTSTSTSDSASTSTSVSDSTSASTSLSASTSTSVSDSTSASTSLSASTSTSVSDSTSASTSLSASTSTSVSDSTSASTSLSASTSTSVSDSTSMSTSLSGSESTSLSDSLSASTSVSASTSTSVSDSTSASTSLSGSTSTSVSDSTSTSTSLSESTSTSVSDSASASTSLSASTSTSVSDSTSASTSLSASTSTSVSDSTSASTSLSASTSTSVSDSTSASTSLSASTSTSVSDSTSTSTSLSASTSTSVSDSTSASTSLSGSASASLSDSLSASTSVSASTSTSVSDSTSMSTSLSGSESTSLSDSLSASTSVSASTSTSVSDSTSASTSLSGSTSTSVSDSTSTSTSLSESTSTSVSDSASASTSLSDSASTSVSDSTSASTSLSGSTSTSVSDSTSTSTSLSESTSTSLSDSASASTSLSDSASTSVSDSTSASTSLSGSTSTSVSDSTSTSTSLSESTSTSLSDSTSISTSLSASTSTSESDSTSTSTSLSGSTSTSVSDSISRSTSLSGSTSTSVSDSTSTSTSDSASTSTSVSDSTSASTSLSASTSTSVSDSTSASTSLSASTSTSVSDSTSASTSLSASTSTSVSDSTSASTSLSASTSTSVSDSTSASTSLSASTSTSVSDSTSASTSLSASTSTSVSDSTSTSTSLSASTSTSVSDSTSASTSLSGSASASLSDSLSASTSVSASTSTSVSDSTSTSTSLSESTSTSLSNSASASTSLSGSTSTSVSDSTSASTSLSASTSTSVSDSTSMSTSLSGSESTSLSDSLSASTSVSASTSTSVSDSTSASTSLSGSTSTSVSDSTSTSTSLSESTSTSVSDSASASTSLSDSASTSVSDSTSASTSLSGSTSTSVSDSTSTSTSLSESTSTSLSDSASASTSLSDSASTSVSDSTSASTSLSGSTSTSVSDSTSASTSLSGSTSTSVSDSTSTSTSLSASTSTSESDSTSTSTSLSGSTSTSVSDSISGSTSLSGSTSTSVSDSTSTSTSDSASTSTSVSDSTSASTSLSASTSTSVSDSTSASTSLSASTSTSVSDSTSASTSLSGSASASLSDSLSASTSVSASTSTSVSDSTSTSTSLSESTSTSLSNSASASTSLSGSTSTSVSDSTSASTSLSASTSTSVSDSTSTSTSLSESTSTSLSDSASASTSLSDSASTSVSDSTSASTSLSGSESTSLSDSASASTSLSASTSTSVSDSTSTSTSDSVSTSTSMSDSTSMSTSLSGSTSTSVSDSTSASTSLSGSTSTSVSDSTSVSTSLSASTSTSESDSTSTSTSLSGSTSTSVSDSTSASTSLSGSTSTSVSDSTSTSTSDSASTSTSVSDSTSASTSLSASTSTSVSDSTSASTSLSASTSTSVSDSTSASTSLSASTSTSVSDSTSASTSLSASTSTSVSDSTSTNTSLSASTSTSVSDSTSASTSLSASTSTSVSDSTSASTSLSASTSTSVSDSTSTSTSLSASTSTSVSDSTSASTSLSGSASASLSDSLSASTSVSASTSTSVSDSTSTSTSLSESTSTSLSNSASASTSLSGSASASLSDSLSASTSVSASTSTSVSDSTSTSTSLSESTSTSLSDSASASTSLSDSASTSVSDSTSASTSLSESTSTSVSDSTSTSTSLSGSESTSLSDSASASTSLSASTSTSVSDSTSTSTSDSVSTSTSMSDSTSMSTSLSGSTSTSVSDSTSASTSLSGSTSTSVSDSTSVSTSLSASTSTSESDSTSTSTSLSGSTSTSVSDSISGSTSLSGSTSTSVSDSTSTSTSDSASTSTSVSDSTSASTSLSASTSTSVSDSTSASTSLSASTSTSVSDSTSASTSLSASTSTSVSDSTSASTSLSASTSTSVSDSTSTSTSLSASTSTSVSDSTSGSTSLSASTSTSVSDSTSTSTSLSASTSTSVSDSTSMSTSLSGSTSTSVSDSTSASTSLSGSTSTSVSDSTSTSTSLSASTSTSVSDSTSTSTSLSGSTSTSVSDSTSASTSSSESTSTSVSDSTSASVSTSISTSISMSESSSTSASTSDSTSTSASTSESRSASHSMSGTDSNNTSSSDSKSHSISNSDSNTTSDSASASTSISDSSSTSTSDSNASHSFSTSHSVSESNSMSTSHSQFDSISTSESMSGTDSTSLSTSLSHSASTSNSTSMTTSESQSNNDSQMHSNSLHHDAKDELPDTGDSDSNSTGLVSAVAAMLAGLGLFGKSRKNKKDKKNKGSEQ.

A signal peptide spans 1–91 (MSRKERNFKR…FAMLNDHHAY (91 aa)). The segment at 92–302 (AASETPMTSE…DSTSTSTSTA (211 aa)) is serine-rich repeat region 1, SRR1. Disordered stretches follow at residues 105 to 280 (NSET…SESQ), 495 to 3575 (DPTS…SNST), and 3588 to 3608 (LGLF…GSEQ). Residues 114–201 (STTVTKSETS…DNSTSNNSTT (88 aa)) are compositionally biased toward low complexity. Positions 209 to 220 (QANTTSTDSQKG) are enriched in polar residues. 3 stretches are compositionally biased toward low complexity: residues 221–234 (STST…STST), 244–280 (TESN…SESQ), and 497–3545 (TSTA…ESQS). The non-repeat region (NRR) stretch occupies residues 303–755 (PLKLRTFSRL…STSLSGSESA (453 aa)). Residues 756–3567 (SLSDSASAST…HDAKDELPDT (2812 aa)) form a serine-rich repeat region 2, SRR2 region. Residues 3564-3568 (LPDTG) carry the LPXTG sorting signal motif. Residue Thr3567 is modified to Pentaglycyl murein peptidoglycan amidated threonine. Positions 3568–3608 (GDSDSNSTGLVSAVAAMLAGLGLFGKSRKNKKDKKNKGSEQ) are cleaved as a propeptide — removed by sortase. Positions 3593–3602 (KSRKNKKDKK) are enriched in basic residues.

Belongs to the serine-rich repeat protein (SRRP) family. In terms of processing, proteolytically cleaved by a metalloprotease. Glycosylated. It is probable that most of the Ser residues in SSR1 and SSR2 are O-GlcNAcylated. Sequential glycosylation by sugar transferases are able to generate complex sugar polymorphisms.

It localises to the secreted. The protein localises to the cell wall. In terms of biological role, mediates binding to human platelets, possibly through a receptor-ligand interaction. This is Serine-rich adhesin for platelets (sraP) from Staphylococcus haemolyticus (strain JCSC1435).